The chain runs to 461 residues: Probable Xaa-Pro aminopeptidase PEPP (461 aa).

Residues Asp257, Asp268, Glu391, and Glu431 each contribute to the Mn(2+) site.

Belongs to the peptidase M24B family. It depends on Mn(2+) as a cofactor.

The enzyme catalyses Release of any N-terminal amino acid, including proline, that is linked to proline, even from a dipeptide or tripeptide.. Functionally, catalyzes the removal of a penultimate prolyl residue from the N-termini of peptides. This Colletotrichum graminicola (strain M1.001 / M2 / FGSC 10212) (Maize anthracnose fungus) protein is Probable Xaa-Pro aminopeptidase PEPP (PEPP).